The chain runs to 1450 residues: DNA-directed RNA polymerase RPB1 homolog (1450 aa).

The protein belongs to the RNA polymerase beta' chain family. Part of the viral DNA-directed RNA polymerase that consists of 8 polII-like subunits (RPB1, RPB2, RPB3, RPB5, RPB6, RPB7, RPB9, RPB10), a capping enzyme and a termination factor.

It localises to the virion. It carries out the reaction RNA(n) + a ribonucleoside 5'-triphosphate = RNA(n+1) + diphosphate. Catalytic component of the DNA-directed RNA polymerase (RNAP) that catalyzes the transcription in the cytoplasm of viral DNA into RNA using the four ribonucleoside triphosphates as substrates. Forms the polymerase active center together with RPB2. Part of the core element with the central large cleft, the clamp element that moves to open and close the cleft and the jaws that are thought to grab the incoming DNA template. This is DNA-directed RNA polymerase RPB1 homolog from Ornithodoros (relapsing fever ticks).